Here is a 274-residue protein sequence, read N- to C-terminus: Putative phosphoenolpyruvate synthase regulatory protein (274 aa).

157-164 (GVSRCGKT) serves as a coordination point for ADP.

The protein belongs to the pyruvate, phosphate/water dikinase regulatory protein family. PSRP subfamily.

It carries out the reaction [pyruvate, water dikinase] + ADP = [pyruvate, water dikinase]-phosphate + AMP + H(+). The enzyme catalyses [pyruvate, water dikinase]-phosphate + phosphate + H(+) = [pyruvate, water dikinase] + diphosphate. Its function is as follows. Bifunctional serine/threonine kinase and phosphorylase involved in the regulation of the phosphoenolpyruvate synthase (PEPS) by catalyzing its phosphorylation/dephosphorylation. In Bordetella avium (strain 197N), this protein is Putative phosphoenolpyruvate synthase regulatory protein.